Reading from the N-terminus, the 433-residue chain is Mitochondrial inner membrane protein OXA1L (433 aa).

At 1–108 (MARNLVCGRW…QCATEPSFTE (108 aa)) the chain is on the mitochondrial intermembrane side. The chain crosses the membrane as a helical span at residues 109–129 (LGLGSYTPVGLIQNLLEYIHV). Topologically, residues 130–134 (DLGLP) are mitochondrial matrix. A helical transmembrane segment spans residues 135–155 (WWGAIATCTVLARCLVFPLIV). The Mitochondrial intermembrane segment spans residues 156 to 207 (KGQREAAKIHNHMPEMQKFSARIREAKLAGDQAEFYKATIEMTRYQKKHDIK). The chain crosses the membrane as a helical span at residues 208–228 (LLRPLILPLTQAPVFISFFIA). Topologically, residues 229-255 (LREMANLPVPSLQTGGLWWFQDLTVSD) are mitochondrial matrix. A helical transmembrane segment spans residues 256–276 (PIYVLPLVVTATMWCVLELGA). At 277 to 293 (ETGVQSNDLQFMRNIIR) the chain is on the mitochondrial intermembrane side. The helical transmembrane segment at 294-314 (VMPLVVLPVTIHFPSAVFMYW) threads the bilayer. Topologically, residues 315-433 (LSSNVFSLCQ…AKKPWQDTLG (119 aa)) are mitochondrial matrix. Residue Ser-359 is modified to Phosphoserine. Phosphothreonine is present on residues Thr-395 and Thr-397. The segment at 397 to 433 (THNPLLQHDPSHPPKAPNSNNSSIKANAKKPWQDTLG) is disordered. Low complexity predominate over residues 413–426 (PNSNNSSIKANAKK).

The protein belongs to the OXA1/ALB3/YidC family. As to quaternary structure, monomer; predominantly monomeric at low salt concentrations. Homooligomer; predominantly homooligomeric at high salt concentrations. Associates with the mitochondrial ribosome. Associates preferentially as a dimer with the large ribosomal subunit 39S of the mitochondrial ribosome. Interacts with OXA1L; promoting cotranslational quality control in mitochondria.

The protein localises to the mitochondrion inner membrane. Its function is as follows. Mitochondrial membrane insertase that mediates the cotranslational insertion of integral membrane proteins into the mitochondrial inner membrane. Essential for the activity and assembly of cytochrome oxidase. Required for the correct biogenesis of ATP synthase and complex I in mitochondria. The polypeptide is Mitochondrial inner membrane protein OXA1L (Oxa1l) (Mus musculus (Mouse)).